Consider the following 217-residue polypeptide: MTQISPTRLHSPLDRLLVEAQRALDTVFGNPPAERPNPAADTPDVVLDPEQRRHAAGLMRINHVGEVCAQGLYFGQAAVARDAHTQHHLLEAAQEETDHLAWCADRLHELDSRPSLFNPVWYAGSYALGALAGLRGDDWSLGFVVETERQVEAHLDEHLETLPQNDQRSRAILRVMKIDEARHADQAEQAGARPLPAPIPSAMALASKLMKTVAYRL.

Fe cation contacts are provided by E66, E96, H99, E148, E180, and H183.

Belongs to the COQ7 family. Requires Fe cation as cofactor.

The protein resides in the cell membrane. The catalysed reaction is a 5-methoxy-2-methyl-3-(all-trans-polyprenyl)benzene-1,4-diol + AH2 + O2 = a 3-demethylubiquinol + A + H2O. The protein operates within cofactor biosynthesis; ubiquinone biosynthesis. Catalyzes the hydroxylation of 2-nonaprenyl-3-methyl-6-methoxy-1,4-benzoquinol during ubiquinone biosynthesis. This is 3-demethoxyubiquinol 3-hydroxylase from Xanthomonas euvesicatoria pv. vesicatoria (strain 85-10) (Xanthomonas campestris pv. vesicatoria).